Reading from the N-terminus, the 96-residue chain is MSAVTPCADGLILRLYIQPKASRDSIVGLHGDEVKVAITAPPVDGQANSHLVKFLGKQFRVAKSQVVIEKGELGRHKQVKIIHPQQIPPEIAALTD.

The protein belongs to the UPF0235 family.

The sequence is that of UPF0235 protein CKO_04329 from Citrobacter koseri (strain ATCC BAA-895 / CDC 4225-83 / SGSC4696).